Consider the following 421-residue polypeptide: Diaminobutyrate--2-oxoglutarate transaminase (421 aa).

Lys262 carries the N6-(pyridoxal phosphate)lysine modification.

This sequence belongs to the class-III pyridoxal-phosphate-dependent aminotransferase family. Requires pyridoxal 5'-phosphate as cofactor.

It carries out the reaction L-2,4-diaminobutanoate + 2-oxoglutarate = L-aspartate 4-semialdehyde + L-glutamate. Its pathway is amine and polyamine biosynthesis; ectoine biosynthesis; L-ectoine from L-aspartate 4-semialdehyde: step 1/3. Its function is as follows. Catalyzes reversively the conversion of L-aspartate beta-semialdehyde (ASA) to L-2,4-diaminobutyrate (DABA) by transamination with L-glutamate. The polypeptide is Diaminobutyrate--2-oxoglutarate transaminase (ectB) (Vibrio parahaemolyticus serotype O3:K6 (strain RIMD 2210633)).